The primary structure comprises 689 residues: DNA topoisomerase 1 (689 aa).

The Toprim domain occupies 3–113 (DNLVIVESPA…KENRVVFNEI (111 aa)). Mg(2+)-binding residues include E9 and D82. One can recognise a Topo IA-type catalytic domain in the interval 129-557 (EMNLVDAQQA…FFSSFKQDVE (429 aa)). The segment at 163-168 (SAGRVQ) is interaction with DNA. The active-site O-(5'-phospho-DNA)-tyrosine intermediate is Y298. The interval 328 to 356 (SKRKASGKQGDQDAHEAIRPSSTMRTPDD) is disordered. 3 consecutive C4-type zinc fingers follow at residues 577 to 603 (CEIC…FPDC), 617 to 645 (CPKC…YPEC), and 658 to 681 (CPKC…CSNC).

This sequence belongs to the type IA topoisomerase family. As to quaternary structure, monomer. Requires Mg(2+) as cofactor.

The enzyme catalyses ATP-independent breakage of single-stranded DNA, followed by passage and rejoining.. In terms of biological role, releases the supercoiling and torsional tension of DNA, which is introduced during the DNA replication and transcription, by transiently cleaving and rejoining one strand of the DNA duplex. Introduces a single-strand break via transesterification at a target site in duplex DNA. The scissile phosphodiester is attacked by the catalytic tyrosine of the enzyme, resulting in the formation of a DNA-(5'-phosphotyrosyl)-enzyme intermediate and the expulsion of a 3'-OH DNA strand. The free DNA strand then undergoes passage around the unbroken strand, thus removing DNA supercoils. Finally, in the religation step, the DNA 3'-OH attacks the covalent intermediate to expel the active-site tyrosine and restore the DNA phosphodiester backbone. This chain is DNA topoisomerase 1, found in Staphylococcus aureus (strain USA300).